A 209-amino-acid polypeptide reads, in one-letter code: Ribulose-phosphate 3-epimerase (209 aa).

A substrate-binding site is contributed by Ser-8. The a divalent metal cation site is built by His-33, Asp-35, His-64, and Asp-170. The active-site Proton acceptor is Asp-35. Substrate contacts are provided by residues His-64, 170-172, and 191-192; these read DGG and GS. The active-site Proton donor is Asp-170.

The protein belongs to the ribulose-phosphate 3-epimerase family. It depends on a divalent metal cation as a cofactor.

The enzyme catalyses D-ribulose 5-phosphate = D-xylulose 5-phosphate. Its pathway is carbohydrate degradation. Catalyzes the reversible epimerization of D-ribulose 5-phosphate to D-xylulose 5-phosphate. In Mycoplasma genitalium (strain ATCC 33530 / DSM 19775 / NCTC 10195 / G37) (Mycoplasmoides genitalium), this protein is Ribulose-phosphate 3-epimerase.